Here is a 691-residue protein sequence, read N- to C-terminus: DNA ligase (691 aa).

NAD(+) contacts are provided by residues 41-45, 90-91, and E130; these read DAEYD and SL. K132 acts as the N6-AMP-lysine intermediate in catalysis. NAD(+) contacts are provided by R153, E190, K307, and K331. Zn(2+)-binding residues include C425, C428, C443, and C449. Residues 610–691 form the BRCT domain; the sequence is APQGVLAGKT…LHQLLEGNTP (82 aa).

The protein belongs to the NAD-dependent DNA ligase family. LigA subfamily. Mg(2+) serves as cofactor. The cofactor is Mn(2+).

It catalyses the reaction NAD(+) + (deoxyribonucleotide)n-3'-hydroxyl + 5'-phospho-(deoxyribonucleotide)m = (deoxyribonucleotide)n+m + AMP + beta-nicotinamide D-nucleotide.. Its function is as follows. DNA ligase that catalyzes the formation of phosphodiester linkages between 5'-phosphoryl and 3'-hydroxyl groups in double-stranded DNA using NAD as a coenzyme and as the energy source for the reaction. It is essential for DNA replication and repair of damaged DNA. The sequence is that of DNA ligase from Burkholderia ambifaria (strain ATCC BAA-244 / DSM 16087 / CCUG 44356 / LMG 19182 / AMMD) (Burkholderia cepacia (strain AMMD)).